The chain runs to 375 residues: 23S rRNA (uracil(747)-C(5))-methyltransferase RlmC (375 aa).

Residues cysteine 3, cysteine 11, cysteine 14, and cysteine 87 each coordinate [4Fe-4S] cluster. Residues glutamine 212, phenylalanine 241, glutamate 262, and asparagine 307 each coordinate S-adenosyl-L-methionine. Cysteine 334 (nucleophile) is an active-site residue.

This sequence belongs to the class I-like SAM-binding methyltransferase superfamily. RNA M5U methyltransferase family. RlmC subfamily.

It carries out the reaction uridine(747) in 23S rRNA + S-adenosyl-L-methionine = 5-methyluridine(747) in 23S rRNA + S-adenosyl-L-homocysteine + H(+). Catalyzes the formation of 5-methyl-uridine at position 747 (m5U747) in 23S rRNA. This chain is 23S rRNA (uracil(747)-C(5))-methyltransferase RlmC, found in Cronobacter sakazakii (strain ATCC BAA-894) (Enterobacter sakazakii).